We begin with the raw amino-acid sequence, 314 residues long: MTNQTQMMEFLLVRFTENWVLLRLHALLFSLIYLTAVLMNLVIILLMILDHRLHMAMYFFLRHLSFLDLCLISATVPKSILNSVASTDSISFLGCVLQLFLVVLLAGSEIGILTAMSYDRYAAICCPLHCEAVMSRGLCVQLMALSWLNRGALGLLYTAGTFSLNFYGSDELHQFFCDVPALLKLTCSKEHAIISVSVAIGVCYAFSCLVCIVVSYVYIFSAVLRISQRQRQSKAFSNCVPHLIVVTVFLVTGAVAYLKPGSDAPSILDLLVSVFYSVAPPTLNPVIYCLKNKDIKSALSKVLWNVRSSGVMKR.

Topologically, residues 1–23 (MTNQTQMMEFLLVRFTENWVLLR) are extracellular. Residue Asn-3 is glycosylated (N-linked (GlcNAc...) asparagine). The chain crosses the membrane as a helical span at residues 24–44 (LHALLFSLIYLTAVLMNLVII). The Cytoplasmic segment spans residues 45–52 (LLMILDHR). The chain crosses the membrane as a helical span at residues 53–73 (LHMAMYFFLRHLSFLDLCLIS). The Extracellular segment spans residues 74–97 (ATVPKSILNSVASTDSISFLGCVL). Cys-95 and Cys-187 are disulfide-bonded. Residues 98-118 (QLFLVVLLAGSEIGILTAMSY) form a helical membrane-spanning segment. The Cytoplasmic portion of the chain corresponds to 119-131 (DRYAAICCPLHCE). Residues 132 to 152 (AVMSRGLCVQLMALSWLNRGA) form a helical membrane-spanning segment. The Extracellular portion of the chain corresponds to 153-194 (LGLLYTAGTFSLNFYGSDELHQFFCDVPALLKLTCSKEHAII). A helical transmembrane segment spans residues 195–215 (SVSVAIGVCYAFSCLVCIVVS). Over 216–235 (YVYIFSAVLRISQRQRQSKA) the chain is Cytoplasmic. Residues 236–256 (FSNCVPHLIVVTVFLVTGAVA) traverse the membrane as a helical segment. Topologically, residues 257-269 (YLKPGSDAPSILD) are extracellular. A helical membrane pass occupies residues 270–290 (LLVSVFYSVAPPTLNPVIYCL). At 291-314 (KNKDIKSALSKVLWNVRSSGVMKR) the chain is on the cytoplasmic side.

It belongs to the G-protein coupled receptor 1 family.

The protein resides in the cell membrane. Functionally, odorant receptor. The sequence is that of Olfactory receptor 14K1 (OR14K1) from Homo sapiens (Human).